We begin with the raw amino-acid sequence, 179 residues long: MSRIGNKPIPLPAGVKYTHAGGKVVVEGPKGKIEQVIPEGIKLETKDGHIHAIRETEKHAAVHGLTRALVFNAVEGVTKGWSKDLDIVGIGYRAELKGKDMVVFTLGYSHPIEFPLPTGITAVIDPKQTRVTVSGIDRQKVGQVAADMRSLRKPDPYKNKGVRYVGEKLKKKAGKAGSK.

This sequence belongs to the universal ribosomal protein uL6 family. Part of the 50S ribosomal subunit.

In terms of biological role, this protein binds to the 23S rRNA, and is important in its secondary structure. It is located near the subunit interface in the base of the L7/L12 stalk, and near the tRNA binding site of the peptidyltransferase center. The polypeptide is Large ribosomal subunit protein uL6 (Acidobacterium capsulatum (strain ATCC 51196 / DSM 11244 / BCRC 80197 / JCM 7670 / NBRC 15755 / NCIMB 13165 / 161)).